A 261-amino-acid polypeptide reads, in one-letter code: Bidirectional sugar transporter SWEET1b (261 aa).

Residues 1–6 (MEDLAK) are Extracellular-facing. A helical membrane pass occupies residues 7 to 27 (FLFGVSGNVIALFLFLSPVPT). The 89-residue stretch at 7–95 (FLFGVSGNVI…VVFLVFASTH (89 aa)) folds into the MtN3/slv 1 domain. Over 28–42 (FWRIIRRKSTEDFSG) the chain is Cytoplasmic. A helical transmembrane segment spans residues 43 to 63 (VPYNMTLINCLLSAWYGLPFV). Residues 64-71 (SPNNILVS) are Extracellular-facing. Residues 72-92 (TINGAGAVIETAYVVVFLVFA) form a helical membrane-spanning segment. Topologically, residues 93–101 (STHKTRLRT) are cytoplasmic. Residues 102–122 (LGLAAAVASVFAAVALVSLLA) form a helical membrane-spanning segment. Topologically, residues 123–129 (LHGQHRK) are extracellular. A helical transmembrane segment spans residues 130 to 150 (LLCGVAATVCSICMYASPLSI). The region spanning 133 to 215 (GVAATVCSIC…VLYAIYRNNK (83 aa)) is the MtN3/slv 2 domain. Residues 151–164 (MRLVIKTKSVEYMP) lie on the Cytoplasmic side of the membrane. Residues 165–185 (FLMSLAVFLCGTSWFIYGLLG) traverse the membrane as a helical segment. Topologically, residues 186–189 (RDPF) are extracellular. A helical membrane pass occupies residues 190 to 210 (VTIPNGCGSFLGAVQLVLYAI). Residues 211–261 (YRNNKGAGGGSGGKQAGDDDVEMAEGRNNKVADGGAADDDSTAGGKAGTEV) are Cytoplasmic-facing. The tract at residues 218 to 261 (GGGSGGKQAGDDDVEMAEGRNNKVADGGAADDDSTAGGKAGTEV) is disordered.

Belongs to the SWEET sugar transporter family. As to quaternary structure, forms homodimers. Highly expressed in leaves. Expressed at very low levels in roots, stems and panicles.

The protein resides in the cell membrane. It carries out the reaction D-glucose(out) = D-glucose(in). The catalysed reaction is D-galactose(in) = D-galactose(out). Functionally, mediates transport of sugars across the plasma membrane. Can transport glucose and galactose, but not fructose, mannose and sucrose. The sequence is that of Bidirectional sugar transporter SWEET1b (SWEET1B) from Oryza sativa subsp. japonica (Rice).